We begin with the raw amino-acid sequence, 392 residues long: INCREASED PETAL GROWTH ANISOTROPY 1-like protein 1 (392 aa).

Positions 11-52 form a coiled coil; sequence LLRLVKELQAYLVRNDKLEKENHELRQEVARLRAQVSNLKSH. Polar residues-rich tracts occupy residues 65 to 76 and 100 to 109; these read QSSYDGSNTDGS and PTIQGQSTAT. The segment at 65–128 is disordered; the sequence is QSSYDGSNTD…SKRTLGKRSV (64 aa). Residues 269 to 299 are a coiled coil; the sequence is KDSLTQALQRIQSLQDRLEESVNNTEKMRDS.

Belongs to the IPGA1 family.

The protein localises to the cytoplasm. The protein resides in the cytoskeleton. Its function is as follows. Microtubule-associated protein probably involved in the regulation of microtubule organization. The protein is INCREASED PETAL GROWTH ANISOTROPY 1-like protein 1 of Arabidopsis thaliana (Mouse-ear cress).